Consider the following 710-residue polypeptide: U3 small nucleolar RNA-associated protein 4 (710 aa).

9 WD repeats span residues 11–59, 64–105, 108–147, 154–192, 199–241, 290–327, 328–365, 488–527, and 529–569; these read YTPS…CLKT, GVDR…PLVN, SNAG…GVIE, RQTS…SAII, RARK…LSQS, FHSH…RQFN, RKNH…LWRI, SMCD…YSEL, and RVNT…LSEW.

In terms of assembly, component of the ribosomal small subunit (SSU) processome.

Its subcellular location is the nucleus. The protein localises to the nucleolus. Functionally, involved in nucleolar processing of pre-18S ribosomal RNA. Required for optimal pre-ribosomal RNA transcription by RNA polymerase I together with a subset of U3 proteins required for transcription (t-UTPs). This chain is U3 small nucleolar RNA-associated protein 4 (utp4), found in Schizosaccharomyces pombe (strain 972 / ATCC 24843) (Fission yeast).